A 146-amino-acid chain; its full sequence is Bacterial hemoglobin (146 aa).

The Globin domain occupies 1–138 (MLDQQTINII…IADVFIQVEA (138 aa)). Positions 53 and 85 each coordinate heme b.

It belongs to the globin family. As to quaternary structure, homodimer.

This protein functions as a terminal oxidase. This chain is Bacterial hemoglobin (vhb), found in Vitreoscilla stercoraria.